We begin with the raw amino-acid sequence, 233 residues long: Ycf53-like protein (233 aa).

Belongs to the ycf53 family.

This chain is Ycf53-like protein, found in Synechocystis sp. (strain ATCC 27184 / PCC 6803 / Kazusa).